The primary structure comprises 224 residues: MMRVLVVEDNALLRHHLKVQLQDSGHQVDAAEDAREADYYLNEHLPDIAIVDLGLPDEDGLSLIRRWRSSDVSLPVLVLTAREGWQDKVEVLSSGADDYVTKPFHIEEVMARMQALMRRNSGLASQVINISPFQVDLSRRELSVNEEVIKLTAFEYTIMETLIRNNGKVVSKDSLMLQLYPDAELRESHTIDVLMGRLRKKIQAQYPHDVITTVRGQGYLFELR.

Residues 3 to 117 form the Response regulatory domain; the sequence is RVLVVEDNAL…EVMARMQALM (115 aa). Asp52 is modified (4-aspartylphosphate). Residues 125–223 constitute a DNA-binding region (ompR/PhoB-type); it reads SQVINISPFQ…VRGQGYLFEL (99 aa).

Phosphorylated by PhoQ.

The protein localises to the cytoplasm. Member of the two-component regulatory system PhoQ/PhoP which regulates the expression of genes involved in virulence and resistance to host defense antimicrobial peptides. Promotes intramacrophage survival of S.typhi. Is required to enhance bacterial resistance to bile in the human intestinal cells. The polypeptide is Virulence transcriptional regulatory protein PhoP (phoP) (Salmonella typhi).